The following is a 242-amino-acid chain: Small ribosomal subunit protein uS7m (242 aa).

Residues 1–37 (MAAPALRAPLRWSGLALGVRCAVWNLPGLTQVRGSRY) constitute a mitochondrion transit peptide. Residue Lys228 is modified to N6-acetyllysine.

Belongs to the universal ribosomal protein uS7 family. In terms of assembly, component of the mitochondrial ribosome small subunit (28S) which comprises a 12S rRNA and about 30 distinct proteins.

It is found in the mitochondrion. This Mus musculus (Mouse) protein is Small ribosomal subunit protein uS7m (Mrps7).